The chain runs to 685 residues: Augmin complex subunit dgt5 (685 aa).

Coiled coils occupy residues 87–165 (LQRY…NKIQ) and 342–379 (NMRN…DLKL).

In terms of assembly, component of the augmin complex composed of dgt2, dgt3, dgt4, dgt5, dgt6, msd1, msd5 and wac. The complex interacts directly or indirectly with microtubules and is required for centrosome-independent generation of spindle microtubules.

The protein localises to the cytoplasm. It is found in the cytoskeleton. Its subcellular location is the spindle. It localises to the chromosome. The protein resides in the centromere. The protein localises to the kinetochore. It is found in the microtubule organizing center. Its subcellular location is the centrosome. Its function is as follows. As part of the augmin complex, plays a role in centrosome-independent generation of spindle microtubules. The complex is required for mitotic spindle assembly through its involvement in localizing gamma-tubulin to spindle microtubules. The sequence is that of Augmin complex subunit dgt5 from Drosophila melanogaster (Fruit fly).